Here is a 246-residue protein sequence, read N- to C-terminus: Probable cytokinin riboside 5'-monophosphate phosphoribohydrolase LOGL5 (246 aa).

Basic and acidic residues predominate over residues 1–10; that stretch reads MMMENSREQQ. The segment at 1-28 is disordered; it reads MMMENSREQQPESSPANNNSKKKKKKKT. Substrate-binding positions include glutamate 103, 121–122, 138–144, and threonine 150; these read RK and GYGTLEE.

The protein belongs to the LOG family. As to expression, expressed in roots and leaves.

The enzyme catalyses N(6)-(dimethylallyl)adenosine 5'-phosphate + H2O = N(6)-dimethylallyladenine + D-ribose 5-phosphate. It carries out the reaction 9-ribosyl-trans-zeatin 5'-phosphate + H2O = trans-zeatin + D-ribose 5-phosphate. Cytokinin-activating enzyme working in the direct activation pathway. Phosphoribohydrolase that converts inactive cytokinin nucleotides to the biologically active free-base forms. The polypeptide is Probable cytokinin riboside 5'-monophosphate phosphoribohydrolase LOGL5 (LOGL5) (Oryza sativa subsp. japonica (Rice)).